Consider the following 152-residue polypeptide: Ubiquitin-conjugating enzyme E2 N (152 aa).

The region spanning 3-149 (GLPRRIIKET…ARAWTRLYAM (147 aa)) is the UBC core domain. Lys-82 is modified (N6-acetyllysine). Cys-87 functions as the Glycyl thioester intermediate in the catalytic mechanism. A Glycyl lysine isopeptide (Lys-Gly) (interchain with G-Cter in ISG15) cross-link involves residue Lys-92.

Belongs to the ubiquitin-conjugating enzyme family. As to quaternary structure, heterodimer with UBE2V2. Interacts (UBE2V2-UBE2N heterodimer) with the E3 ligase STUB1 (via the U-box domain); the complex has a specific 'Lys-63'-linked polyubiquitination activity. Interacts with RNF8 and RNF168. Interacts with RNF11. Interacts with the E3 ligases, HLTF and SHPRH; the interactions promote the 'Lys-63'-linked polyubiquitination of PCNA upon genotoxic stress and lead to DNA repair. Interacts with ARIH2 (via RING-type 2). Interacts with OTUB1; leading to inhibit E2-conjugating activity. Interacts with GPS2; leading to inhibit E2-conjugating activity. Interacts with RIGI and RNF135; involved in RIGI ubiquitination and activation. In terms of processing, conjugation to ISG15 impairs formation of the thioester bond with ubiquitin but not interaction with UBE2V2.

It catalyses the reaction S-ubiquitinyl-[E1 ubiquitin-activating enzyme]-L-cysteine + [E2 ubiquitin-conjugating enzyme]-L-cysteine = [E1 ubiquitin-activating enzyme]-L-cysteine + S-ubiquitinyl-[E2 ubiquitin-conjugating enzyme]-L-cysteine.. It participates in protein modification; protein ubiquitination. Its activity is regulated as follows. Activity is inhibited by binding to OTUB1, which prevents 'Lys-63'-linked polyubiquitination. Activity is inhibited by GPS2, leading to prevent 'Lys-63'-linked polyubiquitination. In terms of biological role, the UBE2V1-UBE2N and UBE2V2-UBE2N heterodimers catalyze the synthesis of non-canonical 'Lys-63'-linked polyubiquitin chains. This type of polyubiquitination does not lead to protein degradation by the proteasome. Mediates transcriptional activation of target genes. Plays a role in the control of progress through the cell cycle and differentiation. Plays a role in the error-free DNA repair pathway and contributes to the survival of cells after DNA damage. Acts together with the E3 ligases, HLTF and SHPRH, in the 'Lys-63'-linked poly-ubiquitination of PCNA upon genotoxic stress, which is required for DNA repair. Appears to act together with E3 ligase RNF5 in the 'Lys-63'-linked polyubiquitination of JKAMP thereby regulating JKAMP function by decreasing its association with components of the proteasome and ERAD. Promotes TRIM5 capsid-specific restriction activity and the UBE2V1-UBE2N heterodimer acts in concert with TRIM5 to generate 'Lys-63'-linked polyubiquitin chains which activate the MAP3K7/TAK1 complex which in turn results in the induction and expression of NF-kappa-B and MAPK-responsive inflammatory genes. Together with RNF135 and UB2V1, catalyzes the viral RNA-dependent 'Lys-63'-linked polyubiquitination of RIGI to activate the downstream signaling pathway that leads to interferon beta production. UBE2V1-UBE2N together with TRAF3IP2 E3 ubiquitin ligase mediate 'Lys-63'-linked polyubiquitination of TRAF6, a component of IL17A-mediated signaling pathway. In Bos taurus (Bovine), this protein is Ubiquitin-conjugating enzyme E2 N (UBE2N).